Reading from the N-terminus, the 308-residue chain is Elongation factor Ts (308 aa).

Residues 80–83 are involved in Mg(2+) ion dislocation from EF-Tu; sequence TDFV.

Belongs to the EF-Ts family.

The protein localises to the cytoplasm. Functionally, associates with the EF-Tu.GDP complex and induces the exchange of GDP to GTP. It remains bound to the aminoacyl-tRNA.EF-Tu.GTP complex up to the GTP hydrolysis stage on the ribosome. This is Elongation factor Ts from Erythrobacter litoralis (strain HTCC2594).